Reading from the N-terminus, the 309-residue chain is Postacrosomal sheath WW domain-binding protein (309 aa).

One can recognise a GRAM domain in the interval Gly-45–Gln-87. 10 repeat units span residues Tyr-175–Gly-181, Tyr-182–Gly-188, Tyr-189–Gly-195, Tyr-217–Gly-223, Tyr-224–Gly-230, Tyr-231–Gly-237, Tyr-238–Gly-244, Tyr-245–Gly-251, Tyr-252–Gly-258, and Tyr-259–Gly-265. Residues Tyr-175–Gly-265 form a 10 X 7 AA tandem repeat of Y-G-X-P-P-X-G region. A PPxY motif motif is present at residues Pro-186–Tyr-189. A compositionally biased stretch (low complexity) spans Gly-251 to Gly-272. The tract at residues Gly-251–Ser-309 is disordered. Residues Ser-298–Ser-309 are compositionally biased toward polar residues.

Expressed in testis.

May play a role in meiotic resumption and pronuclear formation, mediated by a WW domain-signaling pathway during fertilization. This Homo sapiens (Human) protein is Postacrosomal sheath WW domain-binding protein (WBP2NL).